Consider the following 421-residue polypeptide: Probable tRNA N6-adenosine threonylcarbamoyltransferase, mitochondrial (421 aa).

The transit peptide at 1–22 (MNIPKILNNNLVLKRIFCRNYS) directs the protein to the mitochondrion. Residues H133 and H137 each coordinate a divalent metal cation. Substrate contacts are provided by residues 156-160 (LLSGG), D189, G208, E212, 308-309 (AN), and T336. D337 is a binding site for a divalent metal cation.

The protein belongs to the KAE1 / TsaD family. Homodimer. Requires a divalent metal cation as cofactor.

The protein resides in the mitochondrion. The enzyme catalyses L-threonylcarbamoyladenylate + adenosine(37) in tRNA = N(6)-L-threonylcarbamoyladenosine(37) in tRNA + AMP + H(+). In terms of biological role, required for the formation of a threonylcarbamoyl group on adenosine at position 37 (t(6)A37) in mitochondrial tRNAs that read codons beginning with adenine. Probably involved in the transfer of the threonylcarbamoyl moiety of threonylcarbamoyl-AMP (TC-AMP) to the N6 group of A37. Involved in mitochondrial genome maintenance. This Caenorhabditis elegans protein is Probable tRNA N6-adenosine threonylcarbamoyltransferase, mitochondrial.